Consider the following 6629-residue polypeptide: Replicase polyprotein 1ab (6629 aa).

Residues M1–K1750 are Cytoplasmic-facing. The region spanning K675–E780 is the Ubiquitin-like 1 domain. The disordered stretch occupies residues D783–E802. Residues V1003 to T1179 form the Macro domain. In terms of domain architecture, Ubiquitin-like 2 spans C1175–V1227. One can recognise a Peptidase C16 domain in the interval E1236–N1497. The active-site For PL-PRO activity is the C1274. Zn(2+) contacts are provided by C1353, C1355, C1387, and C1390. The C4-type; degenerate zinc finger occupies C1353–C1390. Active-site for PL-PRO activity residues include H1437 and D1448. A helical transmembrane segment spans residues V1751–T1771. Residues V1751–C1864 form an HD1 region. The 3Ecto domain occupies M1769–D1833. Over G1772–N1843 the chain is Lumenal. Disulfide bonds link C1785-C1811 and C1802-C1808. Residues W1844–C1864 traverse the membrane as a helical segment. The Cytoplasmic segment spans residues Y1865–K2280. The segment at Y1911–A2001 is Y1. Residues Y1911–K2263 form the CoV Nsp3 Y domain. 8 residues coordinate Zn(2+): H1915, C1920, C1925, C1928, C1961, H1964, C1968, and C1971. The tract at residues H1915 to C1928 is ZF1. The segment at C1961–C1971 is ZF2. Positions Y2002–L2104 are Y2. The interval Y2002–K2263 is coV-Y. The tract at residues V2105–D2163 is Y3. Residues V2164–K2263 form a Y4 region. The helical transmembrane segment at W2281 to V2301 threads the bilayer. The segment at W2281–I2664 is HD2. At S2302–Y2559 the chain is on the lumenal side. The chain crosses the membrane as a helical span at residues M2560–I2580. The Cytoplasmic portion of the chain corresponds to K2581–S2611. The helical transmembrane segment at Y2612–S2632 threads the bilayer. The Lumenal segment spans residues R2633 to L2643. Residues V2644–I2664 form a helical membrane-spanning segment. Topologically, residues Y2665–W3096 are cytoplasmic. One can recognise a Nsp4C domain in the interval L2684–Q2779. Residues S2780–Q3086 enclose the Peptidase C30 domain. Residues H2820 and C2922 each act as for 3CL-PRO activity in the active site. The helical transmembrane segment at F3097–T3117 threads the bilayer. The tract at residues F3097–Y3317 is HD3. Residues A3118 to L3121 are Lumenal-facing. The chain crosses the membrane as a helical span at residues K3122 to V3142. Over K3143 to T3151 the chain is Cytoplasmic. The chain crosses the membrane as a helical span at residues F3152–Y3172. Over N3173–D3188 the chain is Lumenal. Residues P3189 to F3209 traverse the membrane as a helical segment. Topologically, residues K3210 to E3257 are cytoplasmic. A helical transmembrane segment spans residues L3258–F3278. Over K3279–Y3296 the chain is Lumenal. A helical transmembrane segment spans residues V3297 to Y3317. Residues W3318 to M6629 are Cytoplasmic-facing. The region spanning A3380 to Q3462 is the RdRp Nsp7 cofactor domain. Residues S3463–Q3672 form the RdRp Nsp8 cofactor domain. One can recognise a Nsp9 ssRNA-binding domain in the interval N3673–Q3783. The ExoN/MTase coactivator domain occupies K3785–S3926. Zn(2+)-binding residues include C3858, C3861, H3867, C3878, C3904, C3907, C3915, and C3917. 2 zinc fingers span residues C3858–C3878 and C3904–C3917. Residues Y3940–V4198 enclose the NiRAN domain. Residues K4203–S4301 enclose the Nsp12 Interface domain. The Zn(2+) site is built by H4232, C4238, C4243, C4247, and C4424. The Nsp12 RNA-dependent RNA polymerase domain occupies K4302–Q4868. The segment at G4304–N4517 is rdRp Fingers N-ter. The segment at T4518–P4556 is rdRp Palm N-ter. Residues P4548–G4710 form the RdRp catalytic domain. Residues K4557–G4615 form a rdRp Fingers C-ter region. H4578, C4581, and C4582 together coordinate Zn(2+). The interval T4616–Q4751 is rdRp Palm C-ter. Catalysis depends on residues S4695, D4696, and D4697. The interval H4752–Q4868 is rdRp Thumb. In terms of domain architecture, CV ZBD spans S4869–N4981. Zn(2+)-binding residues include C4873, C4876, C4884, C4887, C4894, C4897, H4901, H4907, C4918, C4923, C4940, and H4943. In terms of domain architecture, (+)RNA virus helicase ATP-binding spans M5125–L5305. G5150–S5157 lines the ATP pocket. Residues A5306 to N5477 form the (+)RNA virus helicase C-terminal domain. Residues M5539–C5753 enclose the ExoN domain. Active-site residues include D5557, E5559, and E5658. Zn(2+)-binding residues include C5674, C5676, C5692, H5695, H5723, C5727, and H5730. Residues H5734 and D5739 contribute to the active site. C5745 serves as a coordination point for Zn(2+). Residues Y5762–Q5989 form the N7-MTase domain. S-adenosyl-L-methionine is bound at residue D5797–G5803. The gpppA-binding stretch occupies residues C5877 to T5891. The Zn(2+) site is built by C5915, C5935, C5946, and H5949. The Nsp15 N-terminal oligomerization domain occupies S5990–R6050. Residues N6051–V6166 form the AV-Nsp11N/CoV-Nsp15M domain. In terms of domain architecture, NendoU spans E6183–P6324. Residues H6212, H6227, K6267, K6371, D6455, K6499, and E6532 contribute to the active site. The 300-residue stretch at Q6327 to V6626 folds into the Nidovirus-type SAM-dependent 2'-O-MTase domain.

This sequence belongs to the coronaviruses polyprotein 1ab family. As to quaternary structure, interacts with host PHB and PHB2. In terms of assembly, interacts with papain-like protease and non-structural protein 6. Monomer. Homodimer. Only the homodimer shows catalytic activity. As to quaternary structure, eight copies of nsp7 and eight copies of nsp8 assemble to form a heterohexadecamer dsRNA-encircling ring structure. In terms of assembly, eight copies of nsp7 and eight copies of nsp8 assemble to form a heterohexadecamer dsRNA-encircling ring structure. Interacts with ORF6 protein. Homodimer. As to quaternary structure, homododecamer. Interacts with proofreading exoribonuclease nsp14 and 2'-O-methyltransferase nsp16; these interactions enhance nsp14 and nsp16 enzymatic activities. In terms of assembly, interacts with host DDX1 (via C-terminus). Interacts with non-structural protein 10. Homohexamer. As to quaternary structure, interacts with non-structural protein 10. The cofactor is Mn(2+). It depends on Zn(2+) as a cofactor. In terms of processing, specific enzymatic cleavages in vivo by its own proteases yield mature proteins. 3C-like proteinase nsp5 liberates nsps 6-16 from the polyprotein. Papain-like and 3C-like proteinases are autocatalytically processed. Post-translationally, N-glycosylated.

The protein resides in the host endoplasmic reticulum membrane. It is found in the host cytoplasm. Its subcellular location is the host perinuclear region. It localises to the host endoplasmic reticulum. The protein localises to the host endoplasmic reticulum-Golgi intermediate compartment. It carries out the reaction Thiol-dependent hydrolysis of ester, thioester, amide, peptide and isopeptide bonds formed by the C-terminal Gly of ubiquitin (a 76-residue protein attached to proteins as an intracellular targeting signal).. It catalyses the reaction RNA(n) + a ribonucleoside 5'-triphosphate = RNA(n+1) + diphosphate. The enzyme catalyses ATP + H2O = ADP + phosphate + H(+). The catalysed reaction is uridylyl-uridylyl-ribonucleotide-RNA = a 3'-end uridylyl-2',3'-cyclophospho-uridine-RNA + a 5'-end dephospho-ribonucleoside-RNA. It carries out the reaction a 5'-end diphospho-ribonucleoside in mRNA + GTP + H(+) = a 5'-end (5'-triphosphoguanosine)-ribonucleoside in mRNA + diphosphate. It catalyses the reaction a 5'-end (N(7)-methyl 5'-triphosphoguanosine)-ribonucleoside in mRNA + S-adenosyl-L-methionine = a 5'-end (N(7)-methyl 5'-triphosphoguanosine)-(2'-O-methyl-ribonucleoside) in mRNA + S-adenosyl-L-homocysteine + H(+). Functionally, multifunctional protein involved in the transcription and replication of viral RNAs. Contains the proteinases responsible for the cleavages of the polyprotein. Its function is as follows. May play a role in the modulation of host cell survival signaling pathway by interacting with host PHB and PHB2. Indeed, these two proteins play a role in maintaining the functional integrity of the mitochondria and protecting cells from various stresses. In terms of biological role, responsible for the cleavages located at the N-terminus of the replicase polyprotein. In addition, PL-PRO possesses a deubiquitinating/deISGylating activity and processes both 'Lys-48'- and 'Lys-63'-linked polyubiquitin chains from cellular substrates. Plays a role in host membrane rearrangement that leads to creation of cytoplasmic double-membrane vesicles (DMV) necessary for viral replication. Alone is able to induce paired membranes. Coexpression of nsp3 and nsp4 does not result in the formation of DMVs. Functionally, responsible for the majority of cleavages as it cleaves the C-terminus of replicase polyprotein at 11 sites. Recognizes substrates containing the core sequence [ILMVF]-Q-|-[SGACN]. Inhibited by the substrate-analog Cbz-Val-Asn-Ser-Thr-Leu-Gln-CMK. Its function is as follows. Forms a hexadecamer with nsp8 (8 subunits of each) that may participate in viral replication by acting as a primase. Alternatively, may synthesize substantially longer products than oligonucleotide primers. In terms of biological role, forms a hexadecamer with nsp7 (8 subunits of each) that may participate in viral replication by acting as a primase. Alternatively, may synthesize substantially longer products than oligonucleotide primers. Forms a primer, NSP9-pU, which is utilized by the polymerase for the initiation of RNA chains. Interacts with ribosome signal recognition particle RNA (SRP). Together with NSP8, suppress protein integration into the cell membrane, thereby disrupting host immune defenses. Functionally, plays a pivotal role in viral transcription by stimulating both nsp14 3'-5' exoribonuclease and nsp16 2'-O-methyltransferase activities. Therefore plays an essential role in viral mRNAs cap methylation. Its function is as follows. RNA-directed RNA polymerase that catalyzes the transcription of viral genomic and subgenomic RNAs. Acts in complex with nsp7 and nsp8 to transcribe both the minus and positive strands of genomic RNA. The kinase-like NiRAN domain of NSP12 attaches one or more nucleotides to the amino terminus of NSP9, forming a covalent RNA-protein intermediate that serves as transcription/replication primer. Subgenomic RNAs (sgRNAs) are formed by discontinuous transcription: The polymerase has the ability to pause at transcription-regulating sequences (TRS) and jump to the leader TRS, resulting in a major deletion. This creates a series of subgenomic RNAs that are replicated, transcribed and translated. In addition, Nsp12 is a subunit of the viral RNA capping enzyme that catalyzes the RNA guanylyltransferase reaction for genomic and sub-genomic RNAs. Subsequently, the NiRAN domain transfers RNA to GDP, and forms the core cap structure GpppA-RNA. In terms of biological role, multi-functional protein with a zinc-binding domain in N-terminus displaying RNA and DNA duplex-unwinding activities with 5' to 3' polarity. Activity of helicase is dependent on magnesium. Enzyme possessing two different activities: an exoribonuclease activity acting on both ssRNA and dsRNA in a 3' to 5' direction and a N7-guanine methyltransferase activity. Acts as a proofreading exoribonuclease for RNA replication, thereby lowering The sensitivity of the virus to RNA mutagens. Functionally, plays a role in viral transcription/replication and prevents the simultaneous activation of host cell dsRNA sensors, such as MDA5/IFIH1, OAS, and PKR. Acts by degrading the 5'-polyuridines generated during replication of the poly(A) region of viral genomic and subgenomic RNAs. Catalyzes a two-step reaction in which a 2'3'-cyclic phosphate (2'3'-cP) is first generated by 2'-O transesterification, which is then hydrolyzed to a 3'-phosphate (3'-P). If not degraded, poly(U) RNA would hybridize with poly(A) RNA tails and activate host dsRNA sensors. Its function is as follows. Methyltransferase that mediates mRNA cap 2'-O-ribose methylation to the 5'-cap structure of viral mRNAs. N7-methyl guanosine cap is a prerequisite for binding of nsp16. Therefore plays an essential role in viral mRNAs cap methylation which is essential to evade immune system. The protein is Replicase polyprotein 1ab (rep) of Gallus gallus (Chicken).